The chain runs to 399 residues: Probable aspartate/prephenate aminotransferase (399 aa).

L-aspartate-binding residues include glycine 39, tryptophan 125, and asparagine 175. An N6-(pyridoxal phosphate)lysine modification is found at lysine 239. Residue arginine 375 participates in L-aspartate binding.

It belongs to the class-I pyridoxal-phosphate-dependent aminotransferase family. In terms of assembly, homodimer. It depends on pyridoxal 5'-phosphate as a cofactor.

The protein localises to the cytoplasm. The enzyme catalyses L-aspartate + 2-oxoglutarate = oxaloacetate + L-glutamate. It carries out the reaction L-arogenate + 2-oxoglutarate = prephenate + L-glutamate. Catalyzes the reversible conversion of aspartate and 2-oxoglutarate to glutamate and oxaloacetate. Can also transaminate prephenate in the presence of glutamate. This Rickettsia prowazekii (strain Madrid E) protein is Probable aspartate/prephenate aminotransferase (aatA).